Here is a 249-residue protein sequence, read N- to C-terminus: Small ribosomal subunit protein eS6 (249 aa).

The span at 223-238 (LRQRDHSKKHTQKVHA) shows a compositional bias: basic residues. Residues 223–249 (LRQRDHSKKHTQKVHAQRAEVAAFQKK) form a disordered region.

The protein belongs to the eukaryotic ribosomal protein eS6 family. As to quaternary structure, component of the small ribosomal subunit. Part of the small subunit (SSU) processome, composed of more than 70 proteins and the RNA chaperone small nucleolar RNA (snoRNA) U3. Ribosomal protein S6 is the major substrate of protein kinases in eukaryote ribosomes.

Its subcellular location is the cytoplasm. It is found in the nucleus. It localises to the nucleolus. Functionally, component of the 40S small ribosomal subunit. Plays an important role in controlling cell growth and proliferation through the selective translation of particular classes of mRNA. Part of the small subunit (SSU) processome, first precursor of the small eukaryotic ribosomal subunit. During the assembly of the SSU processome in the nucleolus, many ribosome biogenesis factors, an RNA chaperone and ribosomal proteins associate with the nascent pre-rRNA and work in concert to generate RNA folding, modifications, rearrangements and cleavage as well as targeted degradation of pre-ribosomal RNA by the RNA exosome. The chain is Small ribosomal subunit protein eS6 (RPS6) from Leishmania infantum.